A 744-amino-acid chain; its full sequence is Integrator complex subunit 11 homolog (744 aa).

The Zn(2+) site is built by H67, H69, D71, H72, H156, and D177. Residues 67-72 (HFHLDH) carry the HXHXDH motif motif. The active site involves E202. H425 is a Zn(2+) binding site. The tract at residues 626-669 (NNNTSDDNNNNNNNNNNNNNNNNNNNNNNNNNNNNNNNNNNNNN) is disordered.

This sequence belongs to the metallo-beta-lactamase superfamily. RNA-metabolizing metallo-beta-lactamase-like family. INTS11 subfamily. As to quaternary structure, component of the Integrator complex. The core complex associates with protein phosphatase 2A subunits, to form the Integrator-PP2A (INTAC) complex. Zn(2+) is required as a cofactor.

It is found in the nucleus. Its subcellular location is the cytoplasm. Its function is as follows. RNA endonuclease component of the integrator complex, a multiprotein complex that terminates RNA polymerase II (Pol II) transcription in the promoter-proximal region of genes. The integrator complex provides a quality checkpoint during transcription elongation by driving premature transcription termination of transcripts that are unfavorably configured for transcriptional elongation: the complex terminates transcription by (1) catalyzing dephosphorylation of the C-terminal domain (CTD) of Pol II subunit polr2a, (2) degrading the exiting nascent RNA transcript via endonuclease activity and (3) promoting the release of Pol II from bound DNA. The integrator complex is also involved in terminating the synthesis of non-coding Pol II transcripts, such as enhancer RNAs (eRNAs), small nuclear RNAs (snRNAs), telomerase RNAs and long non-coding RNAs (lncRNAs). Within the integrator complex, INTS11 constitutes the RNA endonuclease subunit that degrades exiting nascent RNA transcripts. In Dictyostelium discoideum (Social amoeba), this protein is Integrator complex subunit 11 homolog (ints11).